The primary structure comprises 1479 residues: Chromosome partition protein MukB (1479 aa).

34 to 41 (GGNGAGKS) serves as a coordination point for ATP. Coiled-coil stretches lie at residues 337–418 (LNLV…QYQQ), 511–603 (QAER…RAPV), 780–810 (RAAR…DVQK), 847–1116 (ELDR…AKAG), and 1206–1265 (DDPV…LQAV). The tract at residues 666-783 (PGGSEDPRLN…EVPLFGRAAR (118 aa)) is flexible hinge.

It belongs to the SMC family. MukB subfamily. Homodimerization via its hinge domain. Binds to DNA via its C-terminal region. Interacts, and probably forms a ternary complex, with MukE and MukF via its C-terminal region. The complex formation is stimulated by calcium or magnesium. Interacts with tubulin-related protein FtsZ.

The protein localises to the cytoplasm. It localises to the nucleoid. In terms of biological role, plays a central role in chromosome condensation, segregation and cell cycle progression. Functions as a homodimer, which is essential for chromosome partition. Involved in negative DNA supercoiling in vivo, and by this means organize and compact chromosomes. May achieve or facilitate chromosome segregation by condensation DNA from both sides of a centrally located replisome during cell division. The protein is Chromosome partition protein MukB of Pectobacterium carotovorum subsp. carotovorum (strain PC1).